A 200-amino-acid polypeptide reads, in one-letter code: LexA repressor (200 aa).

The segment at residues 28–48 (RAEISNRLGFRSANAAEEHLK) is a DNA-binding region (H-T-H motif). Catalysis depends on for autocatalytic cleavage activity residues S121 and K158.

The protein belongs to the peptidase S24 family. In terms of assembly, homodimer.

It carries out the reaction Hydrolysis of Ala-|-Gly bond in repressor LexA.. Functionally, represses a number of genes involved in the response to DNA damage (SOS response), including recA and lexA. In the presence of single-stranded DNA, RecA interacts with LexA causing an autocatalytic cleavage which disrupts the DNA-binding part of LexA, leading to derepression of the SOS regulon and eventually DNA repair. The chain is LexA repressor from Hahella chejuensis (strain KCTC 2396).